Here is a 116-residue protein sequence, read N- to C-terminus: Large ribosomal subunit protein bL20 (116 aa).

This sequence belongs to the bacterial ribosomal protein bL20 family.

Binds directly to 23S ribosomal RNA and is necessary for the in vitro assembly process of the 50S ribosomal subunit. It is not involved in the protein synthesizing functions of that subunit. The sequence is that of Large ribosomal subunit protein bL20 from Bacteroides fragilis (strain ATCC 25285 / DSM 2151 / CCUG 4856 / JCM 11019 / LMG 10263 / NCTC 9343 / Onslow / VPI 2553 / EN-2).